A 507-amino-acid chain; its full sequence is Cytochrome P450 monooxygenase nodZ (507 aa).

The next 2 membrane-spanning stretches (helical) occupy residues 1-21 (MITASTSVFGGLILAFIFSLL) and 205-225 (GFLHCMAIAGTILGAVTPWFL). Residue asparagine 352 is glycosylated (N-linked (GlcNAc...) asparagine). Cysteine 445 contacts heme.

This sequence belongs to the cytochrome P450 family. The cofactor is heme.

The protein localises to the membrane. It functions in the pathway secondary metabolite biosynthesis. In terms of biological role, cytochrome P450 monooxygenase; part of the gene cluster that mediates the biosynthesis of the indole diterpenes nodulisporic acids (NA). Nodulisporic acid A (NAA) and its chemically modified derivatives are of particular significance because of their highly potent insecticidal activity against blood-feeding arthropods and lack of observable adverse effects on mammals, in particular the tremogenicity associated with the paspaline-derived IDTs is not observed. The geranylgeranyl diphosphate (GGPP) synthase ggs1, localized outside of the cluster, is proposed to catalyze the first step in nodulisporic acid biosynthesis via conversion of farnesyl pyrophosphate and isopentyl pyrophosphate into geranylgeranyl pyrophosphate (GGPP). Condensation of indole-3-glycerol phosphate with GGPP by the prenyl transferase nodC then forms 3-geranylgeranylindole (3-GGI). Epoxidation by the FAD-dependent monooxygenase nodM leads to a single-epoxidized-GGI that is substrate of the terpene cyclase nodB for cyclization to yield emindole SB. The terminal methyl carbon, C28, of emindole SB is then oxidized by the cytochrome P450 monooxygenase nodW to produce nodulisporic acid F (NAF), the pentacyclic core of NAA. NAF is converted to nodulisporic acid E (NAE) via prenylation. This step is probably performed by one of the indole diterpene prenyltransferases nodD1 or nodD2. Several oxidation steps performed by the FAD-linked oxidoreductase nodO and one of the cytochrome P450 monooxygenase nodR, nodX or nodZ further convert NAE to nodulisporic acid D (NAD). NAD is substrate of cytochrome P450 monooxygenase nodJ to produce the precursor of nodulisporic acid C (NAC), converted to NAC by one of the indole diterpene prenyltransferases nodD1 or nodD2. The FAD-dependent monooxygenase nodY2 then oxidizes NAC to nodulisporic acid B (NAB). Finally NAB is converted to NAA by one of the cytochrome P450 monooxygenases nodR, nodX or nodZ. This is Cytochrome P450 monooxygenase nodZ from Hypoxylon pulicicidum.